The primary structure comprises 288 residues: DegV domain-containing protein DR_1903 (288 aa).

Residues 2-280 enclose the DegV domain; the sequence is IAVTTESTAD…PGVVAVLAFP (279 aa). 2 residues coordinate hexadecanoate: Thr-59 and Thr-93.

Functionally, may bind long-chain fatty acids, such as palmitate, and may play a role in lipid transport or fatty acid metabolism. The protein is DegV domain-containing protein DR_1903 of Deinococcus radiodurans (strain ATCC 13939 / DSM 20539 / JCM 16871 / CCUG 27074 / LMG 4051 / NBRC 15346 / NCIMB 9279 / VKM B-1422 / R1).